We begin with the raw amino-acid sequence, 116 residues long: MAGRSGDSDEELLKAVRLIKFLYQSNPPPNPEGTRQARRNRRRRWRERQRQIHSISERILSTYLGRSAEPVPLQLPPLERLTLDCNEDCGTSGTQGVGSPQILVESPTILESGAKE.

A phosphoserine; by host CK2 mark is found at serine 5 and serine 8. The interval 18 to 26 (LIKFLYQSN) is homomultimerization. Residues 23–49 (YQSNPPPNPEGTRQARRNRRRRWRERQ) are disordered. The Nuclear localization signal and RNA-binding (RRE) signature appears at 34–50 (TRQARRNRRRRWRERQR). Basic residues predominate over residues 36-47 (QARRNRRRRWRE). The short motif at 73–84 (LQLPPLERLTLD) is the Nuclear export signal and binding to XPO1 element. A phosphoserine; by host mark is found at serine 92 and serine 99.

The protein belongs to the HIV-1 REV protein family. Homomultimer; when bound to the RRE. Multimeric assembly is essential for activity and may involve XPO1. Binds to human KPNB1, XPO1, TNPO1, RANBP5 and IPO7. Interacts with the viral Integrase. Interacts with human KHDRBS1. Interacts with human NAP1; this interaction decreases Rev multimerization and stimulates its activity. Interacts with human DEAD-box helicases DDX3 and DDX24; these interactions may serve for viral RNA export to the cytoplasm and packaging, respectively. Interacts with human PSIP1; this interaction may inhibit HIV-1 DNA integration by promoting dissociation of the Integrase-LEDGF/p75 complex. In terms of processing, asymmetrically arginine dimethylated at one site by host PRMT6. Methylation impairs the RNA-binding activity and export of viral RNA from the nucleus to the cytoplasm. Post-translationally, phosphorylated by protein kinase CK2. Presence of, and maybe binding to the N-terminus of the regulatory beta subunit of CK2 is necessary for CK2-mediated Rev's phosphorylation.

Its subcellular location is the host nucleus. The protein localises to the host nucleolus. The protein resides in the host cytoplasm. Functionally, escorts unspliced or incompletely spliced viral pre-mRNAs (late transcripts) out of the nucleus of infected cells. These pre-mRNAs carry a recognition sequence called Rev responsive element (RRE) located in the env gene, that is not present in fully spliced viral mRNAs (early transcripts). This function is essential since most viral proteins are translated from unspliced or partially spliced pre-mRNAs which cannot exit the nucleus by the pathway used by fully processed cellular mRNAs. Rev itself is translated from a fully spliced mRNA that readily exits the nucleus. Rev's nuclear localization signal (NLS) binds directly to KPNB1/Importin beta-1 without previous binding to KPNA1/Importin alpha-1. KPNB1 binds to the GDP bound form of RAN (Ran-GDP) and targets Rev to the nucleus. In the nucleus, the conversion from Ran-GDP to Ran-GTP dissociates Rev from KPNB1 and allows Rev's binding to the RRE in viral pre-mRNAs. Rev multimerization on the RRE via cooperative assembly exposes its nuclear export signal (NES) to the surface. Rev can then form a complex with XPO1/CRM1 and Ran-GTP, leading to nuclear export of the complex. Conversion from Ran-GTP to Ran-GDP mediates dissociation of the Rev/RRE/XPO1/RAN complex, so that Rev can return to the nucleus for a subsequent round of export. Beside KPNB1, also seems to interact with TNPO1/Transportin-1, RANBP5/IPO5 and IPO7/RANBP7 for nuclear import. The nucleoporin-like HRB/RIP is an essential cofactor that probably indirectly interacts with Rev to release HIV RNAs from the perinuclear region to the cytoplasm. The chain is Protein Rev from Human immunodeficiency virus type 1 group M subtype B (isolate PCV12) (HIV-1).